An 803-amino-acid chain; its full sequence is Volume-regulated anion channel subunit LRRC8C (803 aa).

The Cytoplasmic segment spans residues 1–22 (MIPVTEFRQFSEQQPAFRVLKP). The helical transmembrane segment at 23–43 (WWDVFTDYLSVAMLMIGVFGC) threads the bilayer. Residues 44–125 (TLQVMQDKII…YERALHWYAK (82 aa)) lie on the Extracellular side of the membrane. 2 disulfides stabilise this stretch: Cys-54–Cys-308 and Cys-115–Cys-293. Asn-64 and Asn-70 each carry an N-linked (GlcNAc...) asparagine glycan. A helical transmembrane segment spans residues 126 to 146 (YFPYLVLIHTLVFMLCSNFWF). The Cytoplasmic segment spans residues 147 to 266 (KFPGSSSKIE…ILYAMYVRQT (120 aa)). The interval 177-209 (EVSGEDSEEKDNRKNNMSRSNTTQSGPEGSLVN) is disordered. The span at 191-209 (NNMSRSNTTQSGPEGSLVN) shows a compositional bias: polar residues. Phosphoserine is present on residues Ser-212 and Ser-215. Residues 267-287 (VLKVIKFLIIIAYNSALVSKV) form a helical membrane-spanning segment. Over 288-320 (QFTVDCNVDIQDMTGYKNFSCNHTMAHLFSKLS) the chain is Extracellular. The chain crosses the membrane as a helical span at residues 321–341 (FCYLCFVSIYGLTCLYTLYWL). Topologically, residues 342 to 803 (FYRSLKEYSF…SDVREQMKTE (462 aa)) are cytoplasmic. LRR repeat units lie at residues 397 to 419 (ENKL…QKLQ), 420 to 443 (TNAH…VFEI), 446 to 465 (LQSL…TIAQ), 468 to 490 (NLQE…SFLK), 492 to 513 (NLKV…MYGL), 515 to 536 (NLEE…VTLE), 543 to 563 (SLKI…VVDV), 566 to 586 (HLQK…NNLK), 590 to 611 (NLTE…VFSL), 613 to 634 (SLQE…VSFQ), 638 to 659 (KLTV…IKKL), 661 to 682 (SLER…LFLC), 684 to 705 (KIRY…IGVL), 707 to 728 (SLQY…LYFC), 730 to 751 (KLKT…IGNL), 753 to 774 (FLSY…LGDC), and 776 to 799 (ALKR…VREQ).

The protein belongs to the LRRC8 family. As to quaternary structure, heterohexamer; oligomerizes with other LRRC8 proteins (LRRC8A, LRRC8B, LRRC8D and/or LRRC8E) to form a heterohexamer. Homoheptamer; inactive, likely because it is not targeted to the plasma membrane in the absence of LRRC8A. In vivo, the subunit composition may depend primarily on expression levels, and heterooligomeric channels containing various proportions of the different LRRC8 proteins may coexist.

It localises to the cell membrane. Its subcellular location is the endoplasmic reticulum membrane. It carries out the reaction chloride(in) = chloride(out). It catalyses the reaction iodide(out) = iodide(in). The enzyme catalyses taurine(out) = taurine(in). The catalysed reaction is 2',3'-cGAMP(out) = 2',3'-cGAMP(in). Functionally, non-essential component of the volume-regulated anion channel (VRAC, also named VSOAC channel), an anion channel required to maintain a constant cell volume in response to extracellular or intracellular osmotic changes. The VRAC channel conducts iodide better than chloride and can also conduct organic osmolytes like taurine. Plays a redundant role in the efflux of amino acids, such as aspartate and glutamate, in response to osmotic stress. The VRAC channel also mediates transport of immunoreactive cyclic dinucleotide GMP-AMP (2'-3'-cGAMP), an immune messenger produced in response to DNA virus in the cytosol. Channel activity requires LRRC8A plus at least one other family member (LRRC8B, LRRC8C, LRRC8D or LRRC8E); channel characteristics depend on the precise subunit composition. In Bos taurus (Bovine), this protein is Volume-regulated anion channel subunit LRRC8C.